Consider the following 445-residue polypeptide: Xylose isomerase (445 aa).

Catalysis depends on residues His-107 and Asp-110. Glu-238, Glu-274, His-277, Asp-302, Asp-313, Asp-315, and Asp-345 together coordinate Mg(2+).

It belongs to the xylose isomerase family. Homotetramer. Requires Mg(2+) as cofactor.

The protein localises to the cytoplasm. The enzyme catalyses alpha-D-xylose = alpha-D-xylulofuranose. This Bacillus spizizenii (strain ATCC 23059 / NRRL B-14472 / W23) (Bacillus subtilis subsp. spizizenii) protein is Xylose isomerase (xylA).